The primary structure comprises 360 residues: DNA replication and repair protein RecF (360 aa).

Residue 33–40 (GENGSGKT) coordinates ATP.

It belongs to the RecF family.

Its subcellular location is the cytoplasm. Functionally, the RecF protein is involved in DNA metabolism; it is required for DNA replication and normal SOS inducibility. RecF binds preferentially to single-stranded, linear DNA. It also seems to bind ATP. This is DNA replication and repair protein RecF from Rickettsia peacockii (strain Rustic).